Consider the following 221-residue polypeptide: tRNA (guanine-N(7)-)-methyltransferase (221 aa).

Residues glutamate 51, glutamate 76, aspartate 103, and aspartate 125 each coordinate S-adenosyl-L-methionine. Aspartate 125 is a catalytic residue. Substrate-binding residues include lysine 129 and aspartate 161.

This sequence belongs to the class I-like SAM-binding methyltransferase superfamily. TrmB family.

The catalysed reaction is guanosine(46) in tRNA + S-adenosyl-L-methionine = N(7)-methylguanosine(46) in tRNA + S-adenosyl-L-homocysteine. Its pathway is tRNA modification; N(7)-methylguanine-tRNA biosynthesis. Catalyzes the formation of N(7)-methylguanine at position 46 (m7G46) in tRNA. The sequence is that of tRNA (guanine-N(7)-)-methyltransferase from Wolbachia pipientis wMel.